The sequence spans 124 residues: Ribonuclease P protein component (124 aa).

It belongs to the RnpA family. Consists of a catalytic RNA component (M1 or rnpB) and a protein subunit.

The enzyme catalyses Endonucleolytic cleavage of RNA, removing 5'-extranucleotides from tRNA precursor.. Its function is as follows. RNaseP catalyzes the removal of the 5'-leader sequence from pre-tRNA to produce the mature 5'-terminus. It can also cleave other RNA substrates such as 4.5S RNA. The protein component plays an auxiliary but essential role in vivo by binding to the 5'-leader sequence and broadening the substrate specificity of the ribozyme. The sequence is that of Ribonuclease P protein component from Mycolicibacterium gilvum (strain PYR-GCK) (Mycobacterium gilvum (strain PYR-GCK)).